The primary structure comprises 842 residues: Translation initiation factor IF-2 (842 aa).

Disordered stretches follow at residues 1–41 (MVAK…GFPD) and 112–219 (RPNR…QTYQ). Basic and acidic residues-rich tracts occupy residues 32–41 (PEDKKQGFPD) and 153–165 (RRGE…RDFS). Residues 328 to 497 (ARPPVVTVMG…MLQAEVMELR (170 aa)) form the tr-type G domain. Residues 337–344 (GHVDHGKT) are G1. 337 to 344 (GHVDHGKT) is a GTP binding site. Residues 362 to 366 (GITQH) form a G2 region. The G3 stretch occupies residues 383–386 (DTPG). GTP contacts are provided by residues 383–387 (DTPGH) and 437–440 (NKID). The G4 stretch occupies residues 437–440 (NKID). A G5 region spans residues 473–475 (SAL).

It belongs to the TRAFAC class translation factor GTPase superfamily. Classic translation factor GTPase family. IF-2 subfamily.

Its subcellular location is the cytoplasm. One of the essential components for the initiation of protein synthesis. Protects formylmethionyl-tRNA from spontaneous hydrolysis and promotes its binding to the 30S ribosomal subunits. Also involved in the hydrolysis of GTP during the formation of the 70S ribosomal complex. In Treponema pallidum (strain Nichols), this protein is Translation initiation factor IF-2 (infB).